The chain runs to 355 residues: (R,S)-reticuline 7-O-methyltransferase (355 aa).

S-adenosyl-L-methionine contacts are provided by residues 197–200 (VGGG), D221, 221–222 (DL), 241–242 (DM), and K255. Catalysis depends on H259, which acts as the Proton acceptor.

This sequence belongs to the class I-like SAM-binding methyltransferase superfamily. Cation-independent O-methyltransferase family. As to quaternary structure, homodimer. In terms of tissue distribution, expressed in capsules, buds and stems, and at lower levels in leaves. Localized to parenchyma cells within the vascular bundle, but only to those cells distal to laticifers. In roots, found in the pericycle within the stele.

The catalysed reaction is (S)-reticuline + S-adenosyl-L-methionine = (S)-laudanine + S-adenosyl-L-homocysteine + H(+). It catalyses the reaction (R)-reticuline + S-adenosyl-L-methionine = (R)-laudanine + S-adenosyl-L-homocysteine + H(+). In terms of biological role, catalyzes the transfer of a methyl group to reticuline to form laudanine. Methylates the simple catechols guaiacol and isovanillic acid as well as the tetrahydrobenzylisoquinolines (R)-reticuline, (S)-reticuline, (R,S)-orientaline, (R)-protosinomenine and (R,S)-isoorientaline. Involved in the production of laudanine. This Papaver somniferum (Opium poppy) protein is (R,S)-reticuline 7-O-methyltransferase.